The following is a 551-amino-acid chain: Genetic interactor of prohibitins 3, mitochondrial (551 aa).

The N-terminal 24 residues, 1-24 (MFVVRRSIVFQQSRRQFSGSIAWL), are a transit peptide targeting the mitochondrion. The CP-type G domain occupies 118-299 (LKEVIRSVPN…IYDLPGYSEN (182 aa)).

The protein belongs to the TRAFAC class YlqF/YawG GTPase family. GEP3 subfamily.

It localises to the mitochondrion. In terms of biological role, may be involved in the mitochondrial lipid metabolism. The polypeptide is Genetic interactor of prohibitins 3, mitochondrial (GEP3) (Vanderwaltozyma polyspora (strain ATCC 22028 / DSM 70294 / BCRC 21397 / CBS 2163 / NBRC 10782 / NRRL Y-8283 / UCD 57-17) (Kluyveromyces polysporus)).